We begin with the raw amino-acid sequence, 334 residues long: GTP 3',8-cyclase (334 aa).

Residues 11–236 (GFNRKIDYLR…ESTESSMGPA (226 aa)) form the Radical SAM core domain. Arg-20 is a binding site for GTP. [4Fe-4S] cluster is bound by residues Cys-27 and Cys-31. Tyr-33 contacts S-adenosyl-L-methionine. Cys-34 is a binding site for [4Fe-4S] cluster. A GTP-binding site is contributed by Arg-69. Residue Gly-73 participates in S-adenosyl-L-methionine binding. Thr-100 provides a ligand contact to GTP. Ser-124 lines the S-adenosyl-L-methionine pocket. Lys-161 serves as a coordination point for GTP. S-adenosyl-L-methionine is bound at residue Met-195. [4Fe-4S] cluster contacts are provided by Cys-260 and Cys-263. Residue 265-267 (RVR) coordinates GTP. Cys-277 provides a ligand contact to [4Fe-4S] cluster.

Belongs to the radical SAM superfamily. MoaA family. Monomer and homodimer. Requires [4Fe-4S] cluster as cofactor.

It carries out the reaction GTP + AH2 + S-adenosyl-L-methionine = (8S)-3',8-cyclo-7,8-dihydroguanosine 5'-triphosphate + 5'-deoxyadenosine + L-methionine + A + H(+). The protein operates within cofactor biosynthesis; molybdopterin biosynthesis. Catalyzes the cyclization of GTP to (8S)-3',8-cyclo-7,8-dihydroguanosine 5'-triphosphate. The protein is GTP 3',8-cyclase of Pseudomonas putida (strain ATCC 700007 / DSM 6899 / JCM 31910 / BCRC 17059 / LMG 24140 / F1).